The following is a 447-amino-acid chain: Rab GDP dissociation inhibitor alpha (447 aa).

A Phosphoserine modification is found at Ser427.

The protein belongs to the Rab GDI family. Interacts with RHOH. Interacts with the non-phosphorylated forms of RAB1A, RAB3A, RAB5A, RAB5B, RAB5C, RAB8A, RAB8B, RAB10, RAB12, RAB35, and RAB43. Interacts with RAB3A.

It localises to the cytoplasm. The protein localises to the golgi apparatus. The protein resides in the trans-Golgi network. In terms of biological role, regulates the GDP/GTP exchange reaction of most Rab proteins by inhibiting the dissociation of GDP from them, and the subsequent binding of GTP to them. Promotes the dissociation of GDP-bound Rab proteins from the membrane and inhibits their activation. Promotes the dissociation of RAB1A, RAB3A, RAB5A and RAB10 from membranes. This is Rab GDP dissociation inhibitor alpha (GDI1) from Bos taurus (Bovine).